The following is a 402-amino-acid chain: Shaggy-related protein kinase GSK2 (402 aa).

The disordered stretch occupies residues 1-38; it reads MDQPAPAPEPMLLDAQPPAAVACDKKQQEGEAPYAEGN. In terms of domain architecture, Protein kinase spans 63–347; sequence YMAERVVGTG…ALDACAHPFF (285 aa). ATP contacts are provided by residues 69-77 and lysine 92; that span reads VGTGSFGIV. Aspartate 188 acts as the Proton acceptor in catalysis.

Belongs to the protein kinase superfamily. CMGC Ser/Thr protein kinase family. GSK-3 subfamily. Interacts with DLT. Interacts with OFP8. Interacts with GRF4. Interacts with PUB24. Interacts with SMOS1. In terms of processing, autophosphorylated. In terms of tissue distribution, expressed in lamina joints, vascular tissue and nodes.

The protein localises to the cytoplasm. It localises to the nucleus. It catalyses the reaction L-seryl-[protein] + ATP = O-phospho-L-seryl-[protein] + ADP + H(+). It carries out the reaction L-threonyl-[protein] + ATP = O-phospho-L-threonyl-[protein] + ADP + H(+). Functionally, serine-threonine kinase that acts as a negative regulator of brassinosteroid (BR) signaling. Phosphorylates DLT and BZR1, two positive regulators that mediates several BR responses. Phosphorylation of DLT and BZR1 inhibits their activities in BR signaling. Phosphorylates OFP8, a positive regulator of BR responses. Phosphorylated OFP8 shuttles from the nucleus to the cytoplasm where it is degraded by the proteasome. Phosphorylates the E3 ubiquitin-protein ligase PUB24, a negative regulator of BR signaling, which targets BZR1 and promotes its degradation via the 26S proteasome. Phosphorylation of PUB24 increases its stability. Phosphorylates the AP2-ERF transcription factor SMOS1, a positive regulator of BR signaling, which cooperatively functions in a transactivating complex with BZR1 to enhance the transcription of BR biosynthetic genes. Phosphorylation of SMOS1 leads to its degradation by an unknown mechanism. The polypeptide is Shaggy-related protein kinase GSK2 (Oryza sativa subsp. japonica (Rice)).